Consider the following 188-residue polypeptide: MAASAFAGAVRAASGILRPLNILASSTYRNCVKNASLISALSTGRFSHIQTPVVSSTPRLPTSERNLTCGHTSVILNRVAPVLPSVLKLPVRSLTYFSARKGKRKTVKAVIYRFLRLHCGLWVRRKAGYKKKLWKKTPARKKRLREFVFCNKTQSKLLDKMTTSFWKRRNWYVDDPYQKYHDRTNLKV.

The protein belongs to the bacterial ribosomal protein bL35 family.

The protein resides in the mitochondrion. The polypeptide is Large ribosomal subunit protein bL35m (MRPL35) (Pongo abelii (Sumatran orangutan)).